We begin with the raw amino-acid sequence, 1386 residues long: MNYTTALPDFIEMQRVSFCWFIAQGLNEELNTFSRIYDFSQNTEYVLFGQEYSLVKPIYNIVRAKKYTANYSAQLVIPLEVRNKKTNIIKYHSKFPIINLPLMTSSATFVINGCERVIVSQIIRSPGVYFEKNKHQKKNKKIRKLISSEIGKLKSFTPPSEILPTESRLYFLKPTIKKKLISDKKKKIRFIKKEEYWNWKGESLNIYSFKQIKDYEIDFSTSFVEHFKVYNDLFKIRHLSTKIKRIKIFLKWLACNNKFSLPNKKHLIFLLINSFNLLSRTIVKYKILKTRNNENKNDFILNDYNQIKKVYDQVLQESETLLSLNINTQILSFILRDLEKFNQLNNFNFLKLNITPKIKVIIANDKIKSSLYFTNSFKELIKFKYNFTKKEKDKKRNQSQATIFKNKTKYLKTKSKIIQYKDDHLIRDIYKKKYEEKELYTATLIPEYGSWIRFGFQKNTKINISKYPIKNQEDEIIIQLDKVTQKPIIHLLKEMGVTDLEICQNLQNSEFFYFNKPILTNSIHQPNKLLRFNLNKNYYKNISEFSRIFDPSYYRLGKIGRSKLNNRLDINLSKRITTITYEDIFAIIDKLITLSTAKQISDDIDHLKNRRVRSVGELLQNLFRIGFQRLLRKLRSQTNKTYSSQLSSFNIVGATIKEFFGASQLSQYMDQTNPLSSLTHRRRISGLGPGGFDRDRISFAVRDIHPSHYGRICPIETPEGQNVGLIASLTTCARVNESGFLETPFWRVINGKVIKNRNPIYLTADIEDFYKIAPADISTNQENYLTKNLIPVRYKQDFLTVTPSEVDFIAVSPIQVVSVAASLIPFFEHDDANRALMGSNMQRQSVPLLLPQKPIVGTGLENQIALDSGMVINAQRAGIVESVTANKIIILEDSGRHYKYDLQKYQRSNQETCINHRPIVWEGEKVKSGQMLTDGPGIISSELSLGQNVLVAYMPWQGYNFEDAILINERLVYEDIFTSIHIERYEIEIDRTAEMSEQTTNNIPNLSISDVQNLNEDGIVTIGTFVKPGDILVGKIIPKDDSEQLPESKLLRAIFGAKAKGVRDTSFRMPEGEYGRVIETLTFNRRTKLAYKFEKIQIFIAQIRKIQVGDKIAGRHGNKGIISRILPRQDMPFLPDGTPVDIILNPLGVPSRMNVGQLYECLLGLAGHKLNRRFKILPFDEMYGPEVSRILINKKLRQASIENDEAWLFNPYSPGKMVLLDGRTGKEFDNPITVGNAYMLKLIHLVDDKMHSRATGPYSLVTQQPLGGKAQHGGQRFGEMEVWALEGFGASFTLKELLTIKSDDMQGRNETLNSIIKGQPIPTSGVPESFKVLVQELRSIGLDLSTYRIDEFSSNQSYEIELNLIEKYNPLLKTFSHTSNINNISF.

Belongs to the RNA polymerase beta chain family. In terms of assembly, in plastids the minimal PEP RNA polymerase catalytic core is composed of four subunits: alpha, beta, beta', and beta''. When a (nuclear-encoded) sigma factor is associated with the core the holoenzyme is formed, which can initiate transcription.

It is found in the plastid. Its subcellular location is the chloroplast. It catalyses the reaction RNA(n) + a ribonucleoside 5'-triphosphate = RNA(n+1) + diphosphate. DNA-dependent RNA polymerase catalyzes the transcription of DNA into RNA using the four ribonucleoside triphosphates as substrates. The sequence is that of DNA-directed RNA polymerase subunit beta from Thalassiosira pseudonana (Marine diatom).